The following is a 440-amino-acid chain: MMADEEEEVKPILQKLQELVDQLYSFRDCYFETHSVEDAGRKQQDVQKEMEKTLQQMEEVVGSVQGKAQVLMLTGKALNVTPDYSPKAEELLSKAVKLEPELVEAWNQLGEVYWKKGDVAAAHTCFSGALTHCRNKVSLQNLSMVLRQLRTDTEDEHSHHVMDSVRQAKLAVQMDVHDGRSWYILGNSYLSLYFSTGQNPKISQQALSAYAQAEKVDRKASSNPDLHLNRATLHKYEESYGEALEGFSRAAALDPAWPEPRQREQQLLEFLDRLTSLLESKGKVKTKKLQSMLGSLRPAHLGPCSDGHYQSASGQKVTLELKPLSTLQPGVNSGAVILGKVVFSLTTEEKVPFTFGLVDSDGPCYAVMVYNIVQSWGVLIGDSVAIPEPNLRLHRIQHKGKDYSFSSVRVETPLLLVVNGKPQGSSSQAVATVASRPQCE.

5 TPR repeats span residues E7–V61, A68–L98, V103–L130, K136–M174, and G179–V216. Positions L13 to Y24 match the Nuclear export signal motif. S203 bears the Phosphoserine; by ATM mark. A Phosphoserine; by CHEK2 modification is found at S221. A TPR 6 repeat occupies P224–L253. Positions K285 to K287 are mediates interaction with 28S rRNA of ribosome-coding tubulin.

As to quaternary structure, interacts with JMY and p300/EP300; the interaction occurs in the nucleus and augments the association between JMY and p300/EP300 in response to DNA damage. Forms a complex with HSF1 and p300/EP300; these interactions augment chromatin-bound HSF1 and p300/EP300 histone acetyltransferase activity, resulting in enhanced heat-shock-responsive transcription. Interacts with PRMT5; the interaction is DNA damage-dependent and promotes PRMT5 interaction with p53/TP53 and subsequent methylation. Interacts with JMY; the interaction occurs in the cytoplasm and results in the inhibition of JYM's nucleation activity. Interacts with ribosome-coding tubulin (via 60S subunit 28S rRNA and protein uL24/RPL26) and the N-terminal of nascent tubulin polypeptide (via alpha-tubulin MREC motif and beta-tubulin MREI motif); these interactions result in tubulin mRNA-targeted degradation. Interacts with ATP5F1B; the interaction occurs in the mitochondria and results in ATP production decrease. Interacts with p53/TP53; the interaction occurs in the mitochondria and results in increased apoptosis. Phosphorylation by ATM kinase induces nuclear accumulation while interfering with nuclear export, and phosphorylation by CHEK2 kinase enhances nuclear stability.

Its subcellular location is the nucleus. It is found in the cytoplasm. It localises to the cytoplasmic vesicle. The protein localises to the mitochondrion matrix. Cofactor involved in the regulation of various cellular mechanisms such as actin regulation, autophagy, chromatin regulation and DNA repair. In non-stress conditions, interacts with cofactor JMY in the cytoplasm which prevents JMY's actin nucleation activity and ability to activate the Arp2/3 complex. Acts as a negative regulator of nutrient stress-induced autophagy by preventing JMY's interaction with MAP1LC3B, thereby preventing autophagosome formation. Involves in tubulin autoregulation by promoting its degradation in response to excess soluble tubulin. To do so, associates with the active ribosome near the ribosome exit tunnel and with nascent tubulin polypeptides early during their translation, triggering tubulin mRNA-targeted degradation. Following DNA damage, phosphorylated by DNA damage responsive protein kinases ATM and CHEK2, leading to its nuclear accumulation and stability. Nuclear TTC5/STRAP promotes the assembly of a stress-responsive p53/TP53 coactivator complex, which includes the coactivators JMY and p300, thereby increasing p53/TP53-dependent transcription and apoptosis. Also recruits arginine methyltransferase PRMT5 to p53/TP53 when DNA is damaged, allowing PRMT5 to methylate p53/TP53. In DNA stress conditions, also prevents p53/TP53 degradation by E3 ubiquitin ligase MDM2. Upon heat-shock stress, forms a chromatin-associated complex with heat-shock factor 1 HSF1 and p300/EP300 to stimulate heat-shock-responsive transcription, thereby increasing cell survival. Mitochondrial TTC5/STRAP interacts with ATP synthase subunit beta ATP5F1B which decreased ATP synthase activity and lowers mitochondrial ATP production, thereby regulating cellular respiration and mitochondrial-dependent apoptosis. Mitochondrial TTC5/STRAP also regulates p53/TP53-mediated apoptosis. This Homo sapiens (Human) protein is Tetratricopeptide repeat protein 5.